The primary structure comprises 226 residues: MGHKVHPTGFRLGVTEDWRSMWYAGSSNFGEYLNTDLQVRNFIRKKLAHASVSRIRIERPAKNALVTIHTARPGIVIGKKGEDIDRLRGEVARLMGVPVHINIEEIRKPELDAKLVAESVAQQLERRIMFRRAMKRAVGNAMRLGAQGIKVHVSGRLNGAEIARSEWYREGRVPLHTLRANIDYGVAEAHTTYGVIGVKVWVFKGEIIDSDAQPAAGGEGARQGKG.

A KH type-2 domain is found at 39-107 (VRNFIRKKLA…PVHINIEEIR (69 aa)).

It belongs to the universal ribosomal protein uS3 family. Part of the 30S ribosomal subunit. Forms a tight complex with proteins S10 and S14.

Functionally, binds the lower part of the 30S subunit head. Binds mRNA in the 70S ribosome, positioning it for translation. This chain is Small ribosomal subunit protein uS3, found in Alkalilimnicola ehrlichii (strain ATCC BAA-1101 / DSM 17681 / MLHE-1).